The following is a 274-amino-acid chain: Copper chaperone for superoxide dismutase (274 aa).

The region spanning 11 to 74 (VCALEFAVQM…LLESTGRQAV (64 aa)) is the HMA domain. Residues C22 and C25 each coordinate Cu cation. K76 participates in a covalent cross-link: Glycyl lysine isopeptide (Lys-Gly) (interchain with G-Cter in ubiquitin). Residues 88 to 234 (AAVAILEGCG…LACGIIARSA (147 aa)) form a superoxide dismutase-like region. C141 and C227 are oxidised to a cystine. Residues H147, H155, H164, and D167 each coordinate Zn(2+). Residues K189, K216, and K241 each participate in a glycyl lysine isopeptide (Lys-Gly) (interchain with G-Cter in ubiquitin) cross-link. The Cu cation site is built by C244 and C246. S267 is subject to Phosphoserine.

This sequence in the C-terminal section; belongs to the Cu-Zn superoxide dismutase family. As to quaternary structure, homodimer, and heterodimer with SOD1. Interacts with COMMD1. Interacts with XIAP/BIRC4. Interacts with SLC31A1(via C-terminal domain); this interaction is Cu(1+)-mediated. The heterodimer CCS:SOD1 interacts with SLC31A1; this heterotrimer is Cu(1+)-mediated and its maintenance is regulated through SOD1 activation. Cu(2+) is required as a cofactor. Requires Zn(2+) as cofactor. Ubiquitinion by XIAP/BIRC4 leads to enhancement of its chaperone activity toward its physiologic target, SOD1, rather than proteasomal degradation. XIAP/BIRC4 preferentially ubiquitinates at Lys-241. Ubiquitous.

Its subcellular location is the cytoplasm. In terms of biological role, delivers copper to copper zinc superoxide dismutase (SOD1). The protein is Copper chaperone for superoxide dismutase of Mus musculus (Mouse).